The chain runs to 298 residues: tRNA-uridine aminocarboxypropyltransferase 2 (298 aa).

M1 bears the N-acetylmethionine mark. A compositionally biased stretch (basic and acidic residues) spans 1–10 (MEPQAEERTL). The disordered stretch occupies residues 1–55 (MEPQAEERTLGEPAPPPSGALASPTPDEEERTEGGAPPTATPAGASGDSTSADGL). The span at 34 to 45 (GGAPPTATPAGA) shows a compositional bias: low complexity. S132 bears the Phosphoserine mark. A DXTW motif is present at residues 178–181 (DGTW).

The protein belongs to the TDD superfamily. DTWD2 family.

It is found in the nucleus. It localises to the cytoplasm. The enzyme catalyses a uridine in tRNA + S-adenosyl-L-methionine = a 3-[(3S)-3-amino-3-carboxypropyl]uridine in tRNA + S-methyl-5'-thioadenosine + H(+). Catalyzes the formation of 3-(3-amino-3-carboxypropyl)uridine (acp3U) at position 20a in the D-loop of several cytoplasmic tRNAs (acp3U(20a)). Also has a weak activity to form acp3U at position 20 in the D-loop of tRNAs (acp3U(20)). Involved in glycoRNA biosynthesis by mediating formation of acp3U, which acts as an attachment site for N-glycans on tRNAs. GlycoRNAs consist of RNAs modified with secretory N-glycans that are presented on the cell surface. In Mus musculus (Mouse), this protein is tRNA-uridine aminocarboxypropyltransferase 2.